Here is a 366-residue protein sequence, read N- to C-terminus: Outer membrane protein IIIA (366 aa).

Residues Met-1–Ala-22 form the signal peptide.

This sequence belongs to the alphaproteobacteria porin family. In terms of assembly, forms calcium-stabilized oligomers. In terms of processing, attached covalently to peptidoglycan.

The protein resides in the cell outer membrane. May act as an outer membrane pore. The polypeptide is Outer membrane protein IIIA (ropA) (Rhizobium leguminosarum bv. viciae).